Reading from the N-terminus, the 444-residue chain is L-cysteine:1D-myo-inositol 2-amino-2-deoxy-alpha-D-glucopyranoside ligase (444 aa).

Cys-66 contributes to the Zn(2+) binding site. L-cysteinyl-5'-AMP-binding positions include 66–69, Thr-81, and 104–106; these read CGIT and NVT. Positions 68–78 match the 'HIGH' region motif; that stretch reads ITPYDATHLGH. Residues 206 to 211 carry the 'ERGGDP' region motif; that stretch reads EHGGDP. L-cysteinyl-5'-AMP is bound at residue Trp-246. Cys-250 provides a ligand contact to Zn(2+). L-cysteinyl-5'-AMP is bound at residue 268–270; the sequence is GSD. Position 275 (His-275) interacts with Zn(2+). Val-302 provides a ligand contact to L-cysteinyl-5'-AMP. Positions 308–312 match the 'KMSKS' region motif; it reads KMSKS.

The protein belongs to the class-I aminoacyl-tRNA synthetase family. MshC subfamily. In terms of assembly, monomer. Zn(2+) is required as a cofactor.

The enzyme catalyses 1D-myo-inositol 2-amino-2-deoxy-alpha-D-glucopyranoside + L-cysteine + ATP = 1D-myo-inositol 2-(L-cysteinylamino)-2-deoxy-alpha-D-glucopyranoside + AMP + diphosphate + H(+). Its function is as follows. Catalyzes the ATP-dependent condensation of GlcN-Ins and L-cysteine to form L-Cys-GlcN-Ins. This chain is L-cysteine:1D-myo-inositol 2-amino-2-deoxy-alpha-D-glucopyranoside ligase, found in Parafrankia sp. (strain EAN1pec).